Here is a 541-residue protein sequence, read N- to C-terminus: Atlastin (541 aa).

The Cytoplasmic portion of the chain corresponds to 1-424 (MGGSAVQVIN…NIFKAARTPA (424 aa)). The GB1/RHD3-type G domain maps to 35–284 (DRFVCVVSVA…LVPMLLAPDN (250 aa)). 5 residues coordinate GDP: R48, K49, G50, K51, and S52. 6 residues coordinate GTP: R48, K49, G50, K51, S52, and F53. Position 52 (S52) interacts with Mg(2+). Residue D121 participates in Mg(2+) binding. GDP-binding residues include R192, D193, and V251. GTP is bound by residues R192, D193, and V251. The 3HB (three-helix bundle) domain stretch occupies residues 322–413 (MLVATAEANH…FTNYQAHNES (92 aa)). The segment at 414-422 (KNIFKAART) is linker. Residues 425–445 (VYFACAVIMYILSGIFGLVGL) form a helical membrane-spanning segment. Residues 446–448 (YTF) are Lumenal-facing. Residues 449-469 (ANFCNLVMGVALLTLALWAYI) form a helical membrane-spanning segment. Topologically, residues 470-541 (RYSGELSDFG…NASNGKVKRS (72 aa)) are cytoplasmic. Phosphothreonine is present on T514.

It belongs to the TRAFAC class dynamin-like GTPase superfamily. GB1/RHD3 GTPase family. GB1 subfamily. In terms of assembly, monomeric and homodimeric. The homodimer, transiently formed by two molecules on opposing membranes, is the active form mediating ER membrane fusion. Interacts with spas; interaction may regulate microtubule dynamics. As to expression, ubiquitously expressed.

Its subcellular location is the endoplasmic reticulum membrane. The protein localises to the golgi apparatus membrane. It carries out the reaction GTP + H2O = GDP + phosphate + H(+). Membrane-anchored GTPase that mediates the GTP-dependent fusion of endoplasmic reticulum (ER) membranes, maintaining the continuous ER network. It facilitates the formation of three-way junctions where ER tubules intersect. Two atlastin-1 on neighboring ER tubules bind GTP and form loose homodimers through the GB1/RHD3-type G domains and 3HB regions. Upon GTP hydrolysis, the 3HB regions tighten, pulling the membranes together to drive their fusion. After fusion, the homodimer disassembles upon release of inorganic phosphate (Pi). Subsequently, GDP dissociates, resetting the monomers to a conformation ready for a new fusion cycle. May also regulate more or less directly Golgi biogenesis. May also regulate microtubule polymerization and Golgi biogenesis. Required for dopaminergic neurons survival and the growth of muscles and synapses at neuromuscular junctions. The protein is Atlastin (atl) of Drosophila melanogaster (Fruit fly).